The chain runs to 252 residues: Geranylgeranylglyceryl phosphate synthase (252 aa).

Residues Asp27 and Thr57 each coordinate Mg(2+). Sn-glycerol 1-phosphate contacts are provided by residues 175–181 (YLEAGSG), 206–207 (GG), and 228–229 (GN).

Belongs to the GGGP/HepGP synthase family. Group II subfamily. The cofactor is Mg(2+).

The protein localises to the cytoplasm. The catalysed reaction is sn-glycerol 1-phosphate + (2E,6E,10E)-geranylgeranyl diphosphate = sn-3-O-(geranylgeranyl)glycerol 1-phosphate + diphosphate. It functions in the pathway membrane lipid metabolism; glycerophospholipid metabolism. Its function is as follows. Prenyltransferase that catalyzes the transfer of the geranylgeranyl moiety of geranylgeranyl diphosphate (GGPP) to the C3 hydroxyl of sn-glycerol-1-phosphate (G1P). This reaction is the first ether-bond-formation step in the biosynthesis of archaeal membrane lipids. This Metallosphaera sedula (strain ATCC 51363 / DSM 5348 / JCM 9185 / NBRC 15509 / TH2) protein is Geranylgeranylglyceryl phosphate synthase.